Reading from the N-terminus, the 338-residue chain is Glyceraldehyde-3-phosphate dehydrogenase, cytosolic (338 aa).

Residues 13–14 (RI), Asp-35, and Arg-82 each bind NAD(+). Residues 153–155 (SCT), Thr-184, 213–214 (TG), and Arg-236 contribute to the D-glyceraldehyde 3-phosphate site. The active-site Nucleophile is Cys-154. Asn-318 is a binding site for NAD(+).

It belongs to the glyceraldehyde-3-phosphate dehydrogenase family. As to quaternary structure, homotetramer.

The protein resides in the cytoplasm. It catalyses the reaction D-glyceraldehyde 3-phosphate + phosphate + NAD(+) = (2R)-3-phospho-glyceroyl phosphate + NADH + H(+). The protein operates within carbohydrate degradation; glycolysis; pyruvate from D-glyceraldehyde 3-phosphate: step 1/5. Key enzyme in glycolysis that catalyzes the first step of the pathway by converting D-glyceraldehyde 3-phosphate (G3P) into 3-phospho-D-glyceroyl phosphate. Essential for the maintenance of cellular ATP levels and carbohydrate metabolism. This Dianthus caryophyllus (Carnation) protein is Glyceraldehyde-3-phosphate dehydrogenase, cytosolic (GAPC).